We begin with the raw amino-acid sequence, 1132 residues long: Phytochrome B (1132 aa).

Residues 1–11 (MASGSRTKHSH) show a composition bias toward basic residues. The tract at residues 1–27 (MASGSRTKHSHQSGQGQVQAQSSGTSN) is disordered. A compositionally biased stretch (low complexity) spans 12–26 (QSGQGQVQAQSSGTS). The GAF domain maps to 231-409 (DVKLLCDTVV…AFGLQLNMEL (179 aa)). Cys-336 contacts phytochromobilin. PAS domains are found at residues 623-694 (VARE…LRGE) and 757-828 (DYKA…MIVL). One can recognise a Histidine kinase domain in the interval 905–1125 (YLCQEIKSPL…LIILDLPMTR (221 aa)).

Belongs to the phytochrome family. As to quaternary structure, homodimer. Contains one covalently linked phytochromobilin chromophore.

Regulatory photoreceptor which exists in two forms that are reversibly interconvertible by light: the Pr form that absorbs maximally in the red region of the spectrum and the Pfr form that absorbs maximally in the far-red region. Photoconversion of Pr to Pfr induces an array of morphogenic responses, whereas reconversion of Pfr to Pr cancels the induction of those responses. Pfr controls the expression of a number of nuclear genes including those encoding the small subunit of ribulose-bisphosphate carboxylase, chlorophyll A/B binding protein, protochlorophyllide reductase, rRNA, etc. It also controls the expression of its own gene(s) in a negative feedback fashion. This Nicotiana tabacum (Common tobacco) protein is Phytochrome B (PHYB).